The sequence spans 329 residues: Nuclear pore complex protein NUP35 (329 aa).

2 disordered regions span residues asparagine 48–lysine 105 and valine 123–glutamate 167. The segment covering valine 123–threonine 139 has biased composition (polar residues). The region spanning leucine 183–alanine 264 is the RRM Nup35-type domain. Positions asparagine 271 to serine 315 are disordered. Positions serine 282–proline 306 are enriched in polar residues.

The protein belongs to the Nup35 family. In terms of assembly, part of the nuclear pore complex (NPC). The NPC has an eight-fold symmetrical structure comprising a central transport channel and two rings, the cytoplasmic and nuclear rings, to which eight filaments are attached. The cytoplasmic filaments have loose ends, while the nuclear filaments are joined in a distal ring, forming a nuclear basket. NPCs are highly dynamic in configuration and composition, and can be devided in 3 subcomplexes, the NUP62 subcomplex, the NUP107-160 subcomplex and the NUP93 subcomplex, containing approximately 30 different nucleoporin proteins.

It localises to the nucleus. It is found in the nuclear pore complex. This chain is Nuclear pore complex protein NUP35, found in Arabidopsis thaliana (Mouse-ear cress).